The chain runs to 723 residues: Fatty acid oxidation complex subunit alpha (723 aa).

The interval 1-189 (MIYQAETLQV…KIGLLDAVVD (189 aa)) is enoyl-CoA hydratase/isomerase. Residue D296 coordinates substrate. A 3-hydroxyacyl-CoA dehydrogenase region spans residues 311 to 723 (NKETQRAAVL…FYGAQQQGSI (413 aa)). Residues M325, D344, 401-403 (VVE), K408, and S430 contribute to the NAD(+) site. H451 functions as the For 3-hydroxyacyl-CoA dehydrogenase activity in the catalytic mechanism. Residue N454 participates in NAD(+) binding. N501 and Y661 together coordinate substrate.

In the N-terminal section; belongs to the enoyl-CoA hydratase/isomerase family. The protein in the C-terminal section; belongs to the 3-hydroxyacyl-CoA dehydrogenase family. Heterotetramer of two alpha chains (FadB) and two beta chains (FadA).

It catalyses the reaction a (3S)-3-hydroxyacyl-CoA + NAD(+) = a 3-oxoacyl-CoA + NADH + H(+). The enzyme catalyses a (3S)-3-hydroxyacyl-CoA = a (2E)-enoyl-CoA + H2O. It carries out the reaction a 4-saturated-(3S)-3-hydroxyacyl-CoA = a (3E)-enoyl-CoA + H2O. The catalysed reaction is (3S)-3-hydroxybutanoyl-CoA = (3R)-3-hydroxybutanoyl-CoA. It catalyses the reaction a (3Z)-enoyl-CoA = a 4-saturated (2E)-enoyl-CoA. The enzyme catalyses a (3E)-enoyl-CoA = a 4-saturated (2E)-enoyl-CoA. It participates in lipid metabolism; fatty acid beta-oxidation. In terms of biological role, involved in the aerobic and anaerobic degradation of long-chain fatty acids via beta-oxidation cycle. Catalyzes the formation of 3-oxoacyl-CoA from enoyl-CoA via L-3-hydroxyacyl-CoA. It can also use D-3-hydroxyacyl-CoA and cis-3-enoyl-CoA as substrate. The chain is Fatty acid oxidation complex subunit alpha from Vibrio vulnificus (strain CMCP6).